We begin with the raw amino-acid sequence, 265 residues long: Tryptophan synthase alpha chain (265 aa).

Catalysis depends on proton acceptor residues Glu-48 and Asp-59.

Belongs to the TrpA family. As to quaternary structure, tetramer of two alpha and two beta chains.

It catalyses the reaction (1S,2R)-1-C-(indol-3-yl)glycerol 3-phosphate + L-serine = D-glyceraldehyde 3-phosphate + L-tryptophan + H2O. It functions in the pathway amino-acid biosynthesis; L-tryptophan biosynthesis; L-tryptophan from chorismate: step 5/5. Its function is as follows. The alpha subunit is responsible for the aldol cleavage of indoleglycerol phosphate to indole and glyceraldehyde 3-phosphate. The chain is Tryptophan synthase alpha chain from Ruthia magnifica subsp. Calyptogena magnifica.